The primary structure comprises 70 residues: Turripeptide Gsg9.2 (70 aa).

The signal sequence occupies residues 1–20 (MKVYCLLLVLLVGLVSQAHG). Residues 21–70 (QLDKKCQMVCTMDYRPVCGSDGRTYPNKCTLTSTACMSQRSITVFHDGEC) form the Kazal-like domain. Disulfide bonds link C26–C56, C30–C49, and C38–C70.

It belongs to the conopeptide P-like superfamily. Expressed by the venom duct.

The protein resides in the secreted. Acts as a neurotoxin by inhibiting an ion channel. May also act as a serine protease inhibitor, since it possess the kazal serine protease inhibitor signature. The chain is Turripeptide Gsg9.2 from Gemmula sogodensis (Gem-turris).